Consider the following 127-residue polypeptide: Large-conductance mechanosensitive channel (127 aa).

The next 2 membrane-spanning stretches (helical) occupy residues 14–34 (VLDLAVGVIIGGAFTGLVKSL) and 69–89 (GAFLNDVINFLITAFVVFLIV).

Belongs to the MscL family. As to quaternary structure, homopentamer.

Its subcellular location is the cell membrane. Channel that opens in response to stretch forces in the membrane lipid bilayer. May participate in the regulation of osmotic pressure changes within the cell. The sequence is that of Large-conductance mechanosensitive channel from Leuconostoc mesenteroides subsp. mesenteroides (strain ATCC 8293 / DSM 20343 / BCRC 11652 / CCM 1803 / JCM 6124 / NCDO 523 / NBRC 100496 / NCIMB 8023 / NCTC 12954 / NRRL B-1118 / 37Y).